The sequence spans 227 residues: Translation initiation factor 6 (227 aa).

This sequence belongs to the eIF-6 family.

Binds to the 50S ribosomal subunit and prevents its association with the 30S ribosomal subunit to form the 70S initiation complex. In Pyrococcus furiosus (strain ATCC 43587 / DSM 3638 / JCM 8422 / Vc1), this protein is Translation initiation factor 6.